The chain runs to 166 residues: Ribosome maturation factor RimM (166 aa).

Positions 94–165 (EGEYYLGKLI…TIELKVLDLL (72 aa)) constitute a PRC barrel domain.

The protein belongs to the RimM family. Binds ribosomal protein uS19.

The protein resides in the cytoplasm. Functionally, an accessory protein needed during the final step in the assembly of 30S ribosomal subunit, possibly for assembly of the head region. Essential for efficient processing of 16S rRNA. May be needed both before and after RbfA during the maturation of 16S rRNA. It has affinity for free ribosomal 30S subunits but not for 70S ribosomes. This chain is Ribosome maturation factor RimM, found in Borrelia garinii subsp. bavariensis (strain ATCC BAA-2496 / DSM 23469 / PBi) (Borreliella bavariensis).